Here is a 148-residue protein sequence, read N- to C-terminus: MSTKTKSPIGQRTVIGFDFGKKYIGVAVGQEMTGSATPLGSVKATDGIPHWDNLAKYLKEWQPDFIVVGLPLNMDGSEQQLTLDAKKFGNRIHGRFGIQVEFQDERLTTADAKEQLFARGGFKNLKKDNIDAESARLIIESYFEQQYT.

It belongs to the YqgF nuclease family.

It is found in the cytoplasm. In terms of biological role, could be a nuclease involved in processing of the 5'-end of pre-16S rRNA. This chain is Putative pre-16S rRNA nuclease, found in Colwellia psychrerythraea (strain 34H / ATCC BAA-681) (Vibrio psychroerythus).